Here is a 334-residue protein sequence, read N- to C-terminus: N-acetyl-gamma-glutamyl-phosphate reductase (334 aa).

Cys-154 is a catalytic residue.

The protein belongs to the NAGSA dehydrogenase family. Type 1 subfamily.

It is found in the cytoplasm. It carries out the reaction N-acetyl-L-glutamate 5-semialdehyde + phosphate + NADP(+) = N-acetyl-L-glutamyl 5-phosphate + NADPH + H(+). It participates in amino-acid biosynthesis; L-arginine biosynthesis; N(2)-acetyl-L-ornithine from L-glutamate: step 3/4. In terms of biological role, catalyzes the NADPH-dependent reduction of N-acetyl-5-glutamyl phosphate to yield N-acetyl-L-glutamate 5-semialdehyde. This is N-acetyl-gamma-glutamyl-phosphate reductase from Salmonella typhimurium (strain LT2 / SGSC1412 / ATCC 700720).